The primary structure comprises 463 residues: Probable glucan endo-1,3-beta-glucosidase eglC (463 aa).

Residues 1 to 18 (MQLTHLLAFALSLATSEA) form the signal peptide. A glycan (N-linked (GlcNAc...) asparagine) is linked at asparagine 84. Glutamate 128 functions as the Proton donor in the catalytic mechanism. An N-linked (GlcNAc...) asparagine glycan is attached at asparagine 183. Glutamate 239 acts as the Nucleophile in catalysis. Residue asparagine 312 is glycosylated (N-linked (GlcNAc...) asparagine). 2 disordered regions span residues 317 to 354 (SASASSSAAGSATPVGSAVPSGSAAVNPSSSGIVSSAV) and 396 to 430 (SGSSATSTTAGSSSDSSSTNSGKSSSESSSTNSGA). Residue glycine 440 is the site of GPI-anchor amidated glycine attachment. The propeptide at 441–463 (GASSVSGSVFGALVAVFAFVATL) is removed in mature form.

The protein belongs to the glycosyl hydrolase 17 family. Post-translationally, the GPI-anchor is attached to the protein in the endoplasmic reticulum and serves to target the protein to the cell surface. There, the glucosamine-inositol phospholipid moiety is cleaved off and the GPI-modified mannoprotein is covalently attached via its lipidless GPI glycan remnant to the 1,6-beta-glucan of the outer cell wall layer.

It is found in the cell membrane. The protein resides in the secreted. The protein localises to the cell wall. The enzyme catalyses Hydrolysis of (1-&gt;3)-beta-D-glucosidic linkages in (1-&gt;3)-beta-D-glucans.. Glucanases play a role in cell expansion during growth, in cell-cell fusion during mating, and in spore release during sporulation. This enzyme may be involved in beta-glucan degradation and also function biosynthetically as a transglycosylase. The sequence is that of Probable glucan endo-1,3-beta-glucosidase eglC (eglC) from Aspergillus oryzae (strain ATCC 42149 / RIB 40) (Yellow koji mold).